Consider the following 425-residue polypeptide: CinA-like protein (425 aa).

The protein belongs to the CinA family.

The polypeptide is CinA-like protein (Trichodesmium erythraeum (strain IMS101)).